Reading from the N-terminus, the 316-residue chain is Ribose-phosphate pyrophosphokinase (316 aa).

ATP contacts are provided by residues 42–44 and 101–102; these read DGE and RQ. The Mg(2+) site is built by histidine 135 and aspartate 174. Lysine 197 is a catalytic residue. Residues arginine 199, aspartate 223, and 227 to 231 each bind D-ribose 5-phosphate; that span reads DTAGT.

The protein belongs to the ribose-phosphate pyrophosphokinase family. Class I subfamily. Homohexamer. Requires Mg(2+) as cofactor.

It is found in the cytoplasm. The enzyme catalyses D-ribose 5-phosphate + ATP = 5-phospho-alpha-D-ribose 1-diphosphate + AMP + H(+). It functions in the pathway metabolic intermediate biosynthesis; 5-phospho-alpha-D-ribose 1-diphosphate biosynthesis; 5-phospho-alpha-D-ribose 1-diphosphate from D-ribose 5-phosphate (route I): step 1/1. Functionally, involved in the biosynthesis of the central metabolite phospho-alpha-D-ribosyl-1-pyrophosphate (PRPP) via the transfer of pyrophosphoryl group from ATP to 1-hydroxyl of ribose-5-phosphate (Rib-5-P). The sequence is that of Ribose-phosphate pyrophosphokinase from Halalkalibacterium halodurans (strain ATCC BAA-125 / DSM 18197 / FERM 7344 / JCM 9153 / C-125) (Bacillus halodurans).